A 461-amino-acid chain; its full sequence is pre-mRNA splicing regulator USH1G (461 aa).

ANK repeat units follow at residues 31–60 (DGMTPTLWAAYHGNLESLRLIVSRGGDPDK), 64–93 (WGNTPLHLAASNGHLHCLSFLVSFGANIWC), and 97–126 (DYHTPLDMAAMKGHMECVRYLDSIAAKQSS). Disordered regions lie at residues 208 to 243 (GTARGKTKMQKKLERRKQGGEGTFKVSEDGRKSARS) and 332 to 368 (EDGGLDGVGAPRGRLQSSPSLDDDSLGSANSLQDRSC). Positions 210–222 (ARGKTKMQKKLER) are enriched in basic residues. In terms of domain architecture, SAM spans 385–447 (LEPETSPLET…KILGAVRRRR (63 aa)). Residue serine 422 is modified to Phosphoserine; by CK2.

In terms of assembly, part of a complex composed of USH1C, USH1G and MYO7A. Interacts with USH1C (via the first PDZ domain). Interacts with PDZD7. Interacts with CDH23 and PCDH15; these interactions may recruit USH1G to the plasma membrane. Interacts with intraflagellar transport proteins IFT20, IFT52 and IFT57. Interacts with splicing factors SF3B1, PRPF6, PRPF31 and SON. Interacts with the U4/U6.U5 tri-small nuclear ribonucleoprotein (tri-snRNP) complex in the presence of pre-mRNAs. Interacts (via SAM domain) with MAGI2 (via PDZ 6 domain); the interaction is triggered by phosphorylation of USH1G by CK2 and negatively regulates MAGI2-mediated endocytosis. In terms of tissue distribution, expressed in vestibule of the inner ear, eye and small intestine.

The protein resides in the cytoplasm. Its subcellular location is the cytosol. It is found in the cytoskeleton. The protein localises to the cell membrane. It localises to the cell projection. The protein resides in the cilium. Its subcellular location is the nucleus speckle. It is found in the nucleus. The protein localises to the cajal body. It localises to the microtubule organizing center. The protein resides in the centrosome. Its subcellular location is the photoreceptor inner segment. In terms of biological role, plays a role in pre-mRNA splicing by regulating the release and transfer of U4/U6.U5 tri-small nuclear ribonucleoprotein (tri-snRNP) complexes from their assembly site in Cajal bodies to nuclear speckles, thereby contributing to the assembly of the pre-catalytic spliceosome on target pre-mRNAs. May also participate in recycling of snRNPs back to Cajal bodies during splicing. Plays a role in regulating MAGI2-mediated endocytosis. Anchoring/scaffolding protein that is a part of the functional network formed by USH1C, USH1G, CDH23 and MYO7A that mediates mechanotransduction in cochlear hair cells. Required for normal development and maintenance of cochlear hair cell bundles. Required for normal hearing. The protein is pre-mRNA splicing regulator USH1G (USH1G) of Homo sapiens (Human).